The primary structure comprises 780 residues: ATP-dependent 6-phosphofructokinase, liver type (780 aa).

Residue Ala-2 is modified to N-acetylalanine. Positions 2–390 (ASVDLEKLRT…NWNIYKLLSH (389 aa)) are N-terminal catalytic PFK domain 1. ATP-binding positions include Gly-25, 88–89 (RC), and 118–121 (GDGS). Position 119 (Asp-119) interacts with Mg(2+). Residues 164–166 (SID), Arg-201, 208–210 (MGR), Glu-264, Arg-292, and 298–301 (HVQR) each bind substrate. Asp-166 serves as the catalytic Proton acceptor. Ser-377 bears the Phosphoserine mark. The segment at 391 to 400 (QKISKEKTNF) is interdomain linker. The tract at residues 401 to 780 (SLAILNVGAP…RRTLSIETGF (380 aa)) is C-terminal regulatory PFK domain 2. Beta-D-fructose 2,6-bisphosphate-binding positions include Arg-470, 527 to 531 (TISNN), Arg-565, 572 to 574 (MGG), and Glu-628. Ser-529 carries O-linked (GlcNAc) serine glycosylation. Tyr-640 bears the Phosphotyrosine mark. Beta-D-fructose 2,6-bisphosphate contacts are provided by residues Arg-654, 660-663 (HLQQ), and Arg-734. Ser-775 is subject to Phosphoserine.

This sequence belongs to the phosphofructokinase type A (PFKA) family. ATP-dependent PFK group I subfamily. Eukaryotic two domain clade 'E' sub-subfamily. Homo- and heterotetramers. Phosphofructokinase (PFK) enzyme functions as a tetramer composed of different combinations of 3 types of subunits, called PFKM (M), PFKL (L) and PFKP (P). The composition of the PFK tetramer differs according to the tissue type it is present in. The kinetic and regulatory properties of the tetrameric enzyme are dependent on the subunit composition, hence can vary across tissues. It depends on Mg(2+) as a cofactor. In terms of processing, glcNAcylation at Ser-529 by OGT decreases enzyme activity, leading to redirect glucose flux through the oxidative pentose phosphate pathway. Glycosylation is stimulated by both hypoxia and glucose deprivation.

Its subcellular location is the cytoplasm. It catalyses the reaction beta-D-fructose 6-phosphate + ATP = beta-D-fructose 1,6-bisphosphate + ADP + H(+). Its pathway is carbohydrate degradation; glycolysis; D-glyceraldehyde 3-phosphate and glycerone phosphate from D-glucose: step 3/4. Allosterically activated by ADP, AMP, or fructose 2,6-bisphosphate, and allosterically inhibited by ATP or citrate. GlcNAcylation by OGT overcomes allosteric regulation. Functionally, catalyzes the phosphorylation of D-fructose 6-phosphate to fructose 1,6-bisphosphate by ATP, the first committing step of glycolysis. Negatively regulates the phagocyte oxidative burst in response to bacterial infection by controlling cellular NADPH biosynthesis and NADPH oxidase-derived reactive oxygen species. Upon macrophage activation, drives the metabolic switch toward glycolysis, thus preventing glucose turnover that produces NADPH via pentose phosphate pathway. The chain is ATP-dependent 6-phosphofructokinase, liver type (PFKL) from Bos taurus (Bovine).